A 325-amino-acid polypeptide reads, in one-letter code: MTQSPRACSAPPARPLLIVAGPTASGKSALALAAAQRFGGTIINADAMQCYADWRIITARPTPADEAAAPHRLYGVRRLEEAVDAAWWRGRALAELAAAELPILCGGTGMYLSSLVNGIAPIPDPGPNARAEARRMLAADGPAALHAWLAARDPATATKLRPSDPQRLARAAEVLLGTGRGLAAWHAAPRAGLAGYRVMLLLLDPPRPALREAIAARFEAMLAAGALAEVAAVAARAPDPALPGLRAHGVPELLAHLAGAISLDEAASRAIAATAAYTKRQATWFRHQKLADQRNTHTIRSRLTDSTQFSESTVRSIISFINLSS.

An ATP-binding site is contributed by 21-28 (GPTASGKS). Position 23–28 (23–28 (TASGKS)) interacts with substrate. An interaction with substrate tRNA region spans residues 166-170 (QRLAR).

Belongs to the IPP transferase family. In terms of assembly, monomer. Mg(2+) is required as a cofactor.

It carries out the reaction adenosine(37) in tRNA + dimethylallyl diphosphate = N(6)-dimethylallyladenosine(37) in tRNA + diphosphate. Catalyzes the transfer of a dimethylallyl group onto the adenine at position 37 in tRNAs that read codons beginning with uridine, leading to the formation of N6-(dimethylallyl)adenosine (i(6)A). This chain is tRNA dimethylallyltransferase, found in Acidiphilium cryptum (strain JF-5).